The sequence spans 178 residues: Large ribosomal subunit protein uL6 (178 aa).

The protein belongs to the universal ribosomal protein uL6 family. As to quaternary structure, part of the 50S ribosomal subunit.

Functionally, this protein binds to the 23S rRNA, and is important in its secondary structure. It is located near the subunit interface in the base of the L7/L12 stalk, and near the tRNA binding site of the peptidyltransferase center. This is Large ribosomal subunit protein uL6 from Corynebacterium glutamicum (strain R).